A 352-amino-acid polypeptide reads, in one-letter code: Transcriptional regulatory protein AlgP (352 aa).

Positions Lys128–Ser352 are disordered. Residues Ala138–Ala341 are compositionally biased toward low complexity.

Its function is as follows. The promoter for a critical alginate biosynthetic gene, AlgD, encoding GDP-mannose dehydrogenase, is activated only under conditions reminiscent of the cystic fibrosis lung (i.e. under high osmolarity), and at least two regulatory genes, AlgP and AlgQ, have been implicated in this activation process. In Pseudomonas aeruginosa (strain ATCC 15692 / DSM 22644 / CIP 104116 / JCM 14847 / LMG 12228 / 1C / PRS 101 / PAO1), this protein is Transcriptional regulatory protein AlgP (algP).